Consider the following 491-residue polypeptide: Glutamate--tRNA ligase (491 aa).

The 'HIGH' region signature appears at 13–23 (PSPTGFLHIGN). 4 residues coordinate Zn(2+): cysteine 110, cysteine 112, cysteine 137, and histidine 139. The 'KMSKS' region motif lies at 254 to 258 (KLSKR). Position 257 (lysine 257) interacts with ATP.

It belongs to the class-I aminoacyl-tRNA synthetase family. Glutamate--tRNA ligase type 1 subfamily. In terms of assembly, monomer. Requires Zn(2+) as cofactor.

It is found in the cytoplasm. It carries out the reaction tRNA(Glu) + L-glutamate + ATP = L-glutamyl-tRNA(Glu) + AMP + diphosphate. Catalyzes the attachment of glutamate to tRNA(Glu) in a two-step reaction: glutamate is first activated by ATP to form Glu-AMP and then transferred to the acceptor end of tRNA(Glu). The polypeptide is Glutamate--tRNA ligase (Listeria monocytogenes serovar 1/2a (strain ATCC BAA-679 / EGD-e)).